Reading from the N-terminus, the 636-residue chain is Translation factor GUF1, mitochondrial (636 aa).

In terms of domain architecture, tr-type G spans 35–218 (SNYRNFSIVA…AIIRDIPGPR (184 aa)). Residues 44–51 (AHVDHGKS), 111–115 (DTPGH), and 165–168 (NKID) each bind GTP.

The protein belongs to the TRAFAC class translation factor GTPase superfamily. Classic translation factor GTPase family. LepA subfamily.

It is found in the mitochondrion inner membrane. It catalyses the reaction GTP + H2O = GDP + phosphate + H(+). Functionally, promotes mitochondrial protein synthesis. May act as a fidelity factor of the translation reaction, by catalyzing a one-codon backward translocation of tRNAs on improperly translocated ribosomes. Binds to mitochondrial ribosomes in a GTP-dependent manner. This Debaryomyces hansenii (strain ATCC 36239 / CBS 767 / BCRC 21394 / JCM 1990 / NBRC 0083 / IGC 2968) (Yeast) protein is Translation factor GUF1, mitochondrial.